A 147-amino-acid polypeptide reads, in one-letter code: Peptide methionine sulfoxide reductase MsrA (147 aa).

Residue C10 is part of the active site.

The protein belongs to the MsrA Met sulfoxide reductase family.

It carries out the reaction L-methionyl-[protein] + [thioredoxin]-disulfide + H2O = L-methionyl-(S)-S-oxide-[protein] + [thioredoxin]-dithiol. The catalysed reaction is [thioredoxin]-disulfide + L-methionine + H2O = L-methionine (S)-S-oxide + [thioredoxin]-dithiol. Its function is as follows. Has an important function as a repair enzyme for proteins that have been inactivated by oxidation. Catalyzes the reversible oxidation-reduction of methionine sulfoxide in proteins to methionine. The chain is Peptide methionine sulfoxide reductase MsrA from Pelagibacter ubique (strain HTCC1062).